Reading from the N-terminus, the 128-residue chain is RutC family protein BUsg_359 (128 aa).

The protein belongs to the RutC family.

The polypeptide is RutC family protein BUsg_359 (Buchnera aphidicola subsp. Schizaphis graminum (strain Sg)).